Reading from the N-terminus, the 89-residue chain is Small ribosomal subunit protein uS15 (89 aa).

The protein belongs to the universal ribosomal protein uS15 family. Part of the 30S ribosomal subunit. Forms a bridge to the 50S subunit in the 70S ribosome, contacting the 23S rRNA.

Functionally, one of the primary rRNA binding proteins, it binds directly to 16S rRNA where it helps nucleate assembly of the platform of the 30S subunit by binding and bridging several RNA helices of the 16S rRNA. Its function is as follows. Forms an intersubunit bridge (bridge B4) with the 23S rRNA of the 50S subunit in the ribosome. In Saccharophagus degradans (strain 2-40 / ATCC 43961 / DSM 17024), this protein is Small ribosomal subunit protein uS15.